A 476-amino-acid chain; its full sequence is NADH-quinone oxidoreductase subunit N (476 aa).

A run of 14 helical transmembrane segments spans residues 5–25, 38–58, 70–90, 97–117, 122–142, 157–177, 196–218, 231–253, 264–284, 292–312, 318–338, 364–384, 401–421, and 445–465; these read LALI…LMLG, LSAL…FGVE, AFGG…ILVA, GMRA…GIMA, LMTL…LASF, FVLG…LYGF, IGLI…AVPF, TPVT…ARIV, WQQI…VGAI, LLAY…AAGT, GVLT…LVVL, LAAA…LFGF, PLAV…IAII, and IVAA…PALA.

This sequence belongs to the complex I subunit 2 family. NDH-1 is composed of 14 different subunits. Subunits NuoA, H, J, K, L, M, N constitute the membrane sector of the complex.

It is found in the cell inner membrane. It carries out the reaction a quinone + NADH + 5 H(+)(in) = a quinol + NAD(+) + 4 H(+)(out). Its function is as follows. NDH-1 shuttles electrons from NADH, via FMN and iron-sulfur (Fe-S) centers, to quinones in the respiratory chain. The immediate electron acceptor for the enzyme in this species is believed to be ubiquinone. Couples the redox reaction to proton translocation (for every two electrons transferred, four hydrogen ions are translocated across the cytoplasmic membrane), and thus conserves the redox energy in a proton gradient. In Sphingopyxis alaskensis (strain DSM 13593 / LMG 18877 / RB2256) (Sphingomonas alaskensis), this protein is NADH-quinone oxidoreductase subunit N.